Reading from the N-terminus, the 73-residue chain is Biotin/lipoyl attachment protein (73 aa).

The 68-residue stretch at 2-69 (TVSIQMAGNL…NEGDVLLELS (68 aa)) folds into the Biotinyl-binding domain. Lys-35 bears the N6-biotinyllysine; alternate mark. Lys-35 is modified (N6-lipoyllysine; alternate).

Post-translationally, can be both biotinylated and lipoylated on Lys-35 upon overexpression in E.coli depending on the growth medium; the nature of the modification in situ in B.subtilis is unknown.

The chain is Biotin/lipoyl attachment protein (yngHB) from Bacillus subtilis (strain 168).